The following is a 570-amino-acid chain: MKASQFFISTLKEAPAEAALASHKLMIRAGLIKANASGLYTWMPMGLRVLRKVENVVREEMARAGSVELLMPVVQPAELWQESGRWEFYGKELLRLKDRHDRDFCMGPTCEEVIADIVRKEINSYKQLPKNFYHIQTKFRDEVRPRFGVMRAREFVMKDAYSFHADYASLQTTYQDMYDAYCRIFTRLGLAFRPVAADTGSIGGTGSHEFQVLAESGEDVIAYSDTSDYAANIELAPTLPLKGERAAAQAELVKVHTPNVKTIDSLVDFLSIPIEKTLKSIVVEGENEGELILLLLRGDHEFNDIKAEKLAGVKSPLTMASPAAIVEQFGANGGSLGPVGFAGKVYADFATEKGADWVIGANEDDYHYTGFNFGRDAAEPEFVDLRNVVEGDESPDGQGRLKLARGIEVGHVFQLRDKYTQAMNVSFLDNNGKSQIMEMGCYGIGITRVVAAAIEQNNDEKGIIWTKAMAPFEVVIVPMNYKKSDTVREAADKIYAELLAAGADVLLDDRDERAGVLLNDSELLGIPHRIVIGDRALKEGNVEYAERRDNEAQAVAIGEIVARVTASLNA.

This sequence belongs to the class-II aminoacyl-tRNA synthetase family. ProS type 1 subfamily. In terms of assembly, homodimer.

The protein localises to the cytoplasm. It catalyses the reaction tRNA(Pro) + L-proline + ATP = L-prolyl-tRNA(Pro) + AMP + diphosphate. In terms of biological role, catalyzes the attachment of proline to tRNA(Pro) in a two-step reaction: proline is first activated by ATP to form Pro-AMP and then transferred to the acceptor end of tRNA(Pro). As ProRS can inadvertently accommodate and process non-cognate amino acids such as alanine and cysteine, to avoid such errors it has two additional distinct editing activities against alanine. One activity is designated as 'pretransfer' editing and involves the tRNA(Pro)-independent hydrolysis of activated Ala-AMP. The other activity is designated 'posttransfer' editing and involves deacylation of mischarged Ala-tRNA(Pro). The misacylated Cys-tRNA(Pro) is not edited by ProRS. The sequence is that of Proline--tRNA ligase from Neisseria meningitidis serogroup B (strain ATCC BAA-335 / MC58).